The chain runs to 172 residues: Stellate protein CG33236/CG33240/CG33244/CG33245 (172 aa).

It belongs to the casein kinase 2 subunit beta family. In terms of assembly, interacts in vitro with the casein kinase 2 alpha subunit (CkII-alpha). The relevance of such interaction is however unclear in vivo. In terms of tissue distribution, probably not expressed in wild-type flies. In males lacking the Y chromosome, it is testis-specific and constitutes the main component of star-shaped crystals.

Unknown. In males lacking the Y chromosome, its strong overexpression leads to the appearance of proteinaceous star-shaped crystals in the primary spermatocytes causing meiotic drive, possibly by interfering with normal casein kinase 2 activity. This is Stellate protein CG33236/CG33240/CG33244/CG33245 (Ste:CG33236) from Drosophila melanogaster (Fruit fly).